Consider the following 634-residue polypeptide: MEPSPLSPSGAALPLPLSLAPPPLPLPAAAVVHVSFPEVTSALLESLNQQRLQGQLCDVSIRVQGREFRAHRAVLAASSPYFHDQVLLKGMTSISLPSVMDPGAFETVLASAYTGRLSMAAADIVNFLTVGSVLQMWHIVDKCTELLREGRASATTTITTAAATSVTVPGAGVPSGSGGTVAPATMGSARSHASSRASENQSPSSSNYFSPRESTDFSSSSQEAFAASAVGSGERRGGGPVFPAPVVGSGGATSGKLLLEADELCDDGGDGRGAVVPGAGLRRPTYTPPSIMPQKHWVYVKRGGNCPAPTPLVPQDPDLEEEEEEEDLVLTCEDDEDEELGGSSRVPVGGGPEATLSISDVRTLSEPPDKGEEQVNFCESSNDFGPYEGGGPVAGLDDSGGPTPSSYAPSHPPRPLLPLDMQGNQILVFPSSSSSSSSQAPGQPPGNQAEHGAVTVGGTSVGSLGVPGSVGGVPGGTGSGDGNKIFLCHCGKAFSHKSMRDRHVNMHLNLRPFDCPVCNKKFKMKHHLTEHMKTHTGLKPYECGVCAKKFMWRDSFMRHRGHCERRHRLGGVGAVPGPGTPTGPSLPSKRESPGVGGGSGDEASAATPPSSRRVWSPPRVHKVEMGFGGGGGAN.

Residues 57 to 121 (CDVSIRVQGR…AYTGRLSMAA (65 aa)) enclose the BTB domain. 2 disordered regions span residues 167–247 (TVPG…APVV) and 308–461 (APTP…GTSV). Residues 180 to 198 (TVAPATMGSARSHASSRAS) show a composition bias toward low complexity. Residues 199-209 (ENQSPSSSNYF) show a composition bias toward polar residues. At Ser202 the chain carries Phosphoserine. Positions 217-229 (FSSSSQEAFAASA) are enriched in low complexity. Residues 317–340 (PDLEEEEEEEDLVLTCEDDEDEEL) are compositionally biased toward acidic residues. Residues 452–461 (GAVTVGGTSV) are compositionally biased toward low complexity. Residues 486–507 (FLCHCGKAFSHKSMRDRHVNMH) form a C2H2-type 1; atypical zinc finger. C2H2-type zinc fingers lie at residues 513 to 535 (FDCP…MKTH) and 541 to 562 (YECG…HRGH). The interval 568–634 (RLGGVGAVPG…MGFGGGGGAN (67 aa)) is disordered. A compositionally biased stretch (low complexity) spans 608–618 (PPSSRRVWSPP).

Belongs to the krueppel C2H2-type zinc-finger protein family.

The protein resides in the nucleus. Its function is as follows. May be involved in transcriptional regulation. The chain is Zinc finger and BTB domain-containing protein 22 (ZBTB22) from Homo sapiens (Human).